Reading from the N-terminus, the 589-residue chain is Glucose starvation modulator protein 1 (589 aa).

Positions 20 to 48 (CVFCHQKHLQCSNERPCKNCVKRNIGHEC) form a DNA-binding region, zn(2)-C6 fungal-type. Disordered stretches follow at residues 59–90 (LTGNGKGSSSKTKTPRKKLKSTPITASSPSVA), 218–240 (NNSNNTSHNDNFIAQNNNNNPEP), and 340–362 (ANGQTEDLLDHNKDDSRKNPGNG). Polar residues predominate over residues 80-90 (TPITASSPSVA). Residues 347 to 357 (LLDHNKDDSRK) show a composition bias toward basic and acidic residues. The 72-residue stretch at 471-542 (SLLDYKKLVE…FKFFKNIAVN (72 aa)) folds into the PAS domain.

This sequence belongs to the ERT1/acuK family.

It localises to the nucleus. Transcription factor which regulates nonfermentable carbon utilization. This is Glucose starvation modulator protein 1 (GSM1) from Candida tropicalis (strain ATCC MYA-3404 / T1) (Yeast).